The sequence spans 436 residues: tRNA (guanine(37)-N(1))-methyltransferase 1 (436 aa).

S-adenosyl-L-methionine-binding positions include His229, 277 to 278 (DL), and Asn325.

This sequence belongs to the class I-like SAM-binding methyltransferase superfamily. TRM5/TYW2 family. As to quaternary structure, monomer.

Its subcellular location is the mitochondrion matrix. The protein localises to the nucleus. The protein resides in the cytoplasm. The enzyme catalyses guanosine(37) in tRNA + S-adenosyl-L-methionine = N(1)-methylguanosine(37) in tRNA + S-adenosyl-L-homocysteine + H(+). In terms of biological role, specifically methylates the N1 position of guanosine-37 in various cytoplasmic and mitochondrial tRNAs. Methylation is not dependent on the nature of the nucleoside 5' of the target nucleoside. This is the first step in the biosynthesis of wybutosine (yW), a modified base adjacent to the anticodon of tRNAs and required for accurate decoding. The sequence is that of tRNA (guanine(37)-N(1))-methyltransferase 1 from Phaeodactylum tricornutum (strain CCAP 1055/1).